The following is an 81-amino-acid chain: Translational regulator CsrA (81 aa).

The protein belongs to the CsrA/RsmA family. As to quaternary structure, homodimer; the beta-strands of each monomer intercalate to form a hydrophobic core, while the alpha-helices form wings that extend away from the core.

Its subcellular location is the cytoplasm. Its function is as follows. A translational regulator that binds mRNA to regulate translation initiation and/or mRNA stability. Usually binds in the 5'-UTR at or near the Shine-Dalgarno sequence preventing ribosome-binding, thus repressing translation. Its main target seems to be the major flagellin gene, while its function is anatagonized by FliW. The chain is Translational regulator CsrA from Halothermothrix orenii (strain H 168 / OCM 544 / DSM 9562).